Here is a 63-residue protein sequence, read N- to C-terminus: Large ribosomal subunit protein bL35 (63 aa).

It belongs to the bacterial ribosomal protein bL35 family.

In Sulfurovum sp. (strain NBC37-1), this protein is Large ribosomal subunit protein bL35.